The chain runs to 803 residues: Ras GTPase-activating protein 4B (803 aa).

C2 domains follow at residues 1 to 105 (MAKR…SGWA) and 116 to 232 (VQGE…EGWF). The Ca(2+) site is built by Asp21, Asp27, Asp74, Asp76, Ser79, Asp82, Asp149, Asp155, Asp202, Asp204, Ser207, and Asp210. Residues 318 to 546 (GLAKDFLDLL…AQLKDFITKL (229 aa)) enclose the Ras-GAP domain. The PH domain maps to 566-673 (PPVKEGPLFI…WLSALRKVSI (108 aa)). The Btk-type zinc finger occupies 675 to 711 (NTGLLGSYHPGVFRGDKWSCCHQKEKTGQGCDKTRSR). Positions 683, 694, 695, and 705 each coordinate Zn(2+). The tract at residues 781–803 (EAHSSSPAGSPPSEPNCLLELQT) is disordered.

Requires Ca(2+) as cofactor.

The protein localises to the cytoplasm. It is found in the cytosol. The protein resides in the cell membrane. Functionally, ca(2+)-dependent Ras GTPase-activating protein, that may play a role in the Ras-MAPK pathway. This is Ras GTPase-activating protein 4B (RASA4B) from Homo sapiens (Human).